A 99-amino-acid chain; its full sequence is Nucleoid-associated protein SpyM3_1606 (99 aa).

Belongs to the YbaB/EbfC family. As to quaternary structure, homodimer.

It localises to the cytoplasm. The protein localises to the nucleoid. In terms of biological role, binds to DNA and alters its conformation. May be involved in regulation of gene expression, nucleoid organization and DNA protection. This chain is Nucleoid-associated protein SpyM3_1606, found in Streptococcus pyogenes serotype M3 (strain ATCC BAA-595 / MGAS315).